Consider the following 250-residue polypeptide: Endonuclease NucS 2 (250 aa).

Belongs to the NucS endonuclease family.

Its subcellular location is the cytoplasm. Cleaves both 3' and 5' ssDNA extremities of branched DNA structures. This chain is Endonuclease NucS 2, found in Halobacterium salinarum (strain ATCC 700922 / JCM 11081 / NRC-1) (Halobacterium halobium).